We begin with the raw amino-acid sequence, 306 residues long: Glutathione transport system permease protein GsiC (306 aa).

At 1 to 8 (MLNYVIKR) the chain is on the cytoplasmic side. Residues 9 to 29 (LLGLIPTLFIVSVLVFLFVHM) traverse the membrane as a helical segment. Topologically, residues 30-102 (LPGDPARLIA…SRFMPTLWLT (73 aa)) are periplasmic. The 198-residue stretch at 95 to 292 (FMPTLWLTIT…LEFILINLVV (198 aa)) folds into the ABC transmembrane type-1 domain. The chain crosses the membrane as a helical span at residues 103–123 (ITSMVWAVIFGMAAGIIAAVW). Residues 124 to 134 (RNRWPDRLSMT) lie on the Cytoplasmic side of the membrane. A helical membrane pass occupies residues 135 to 155 (IAVSGISFPAFALGMLLIQVF). Over 156–168 (SVELGWLPTVGAD) the chain is Periplasmic. The helical transmembrane segment at 169 to 189 (SWQHYILPSLTLGAAVAAVMA) threads the bilayer. Residues 190 to 228 (RFTRASFVDVLSEDYMRTARAKGVSETWVVLKHGLRNAM) lie on the Cytoplasmic side of the membrane. The chain crosses the membrane as a helical span at residues 229-249 (IPVVTMMGLQFGFLLGGSIVV). At 250–277 (EKVFNWPGLGRLLVDSVEMRDYPVIQAE) the chain is on the periplasmic side. The chain crosses the membrane as a helical span at residues 278–298 (ILLFSLEFILINLVVDVLYAA). Residues 299–306 (INPAIRYK) are Cytoplasmic-facing.

The protein belongs to the binding-protein-dependent transport system permease family. The complex is composed of two ATP-binding proteins (GsiA), two transmembrane proteins (GsiC and GsiD) and a solute-binding protein (GsiB).

The protein resides in the cell inner membrane. Its function is as follows. Part of the ABC transporter complex GsiABCD involved in glutathione import. Probably responsible for the translocation of the substrate across the membrane. This is Glutathione transport system permease protein GsiC from Escherichia coli O6:H1 (strain CFT073 / ATCC 700928 / UPEC).